Here is a 150-residue protein sequence, read N- to C-terminus: Large ribosomal subunit protein bL9 (150 aa).

Belongs to the bacterial ribosomal protein bL9 family.

Its function is as follows. Binds to the 23S rRNA. In Methylibium petroleiphilum (strain ATCC BAA-1232 / LMG 22953 / PM1), this protein is Large ribosomal subunit protein bL9.